The sequence spans 539 residues: O-phosphoserine--tRNA(Cys) ligase (539 aa).

Residues 188 to 190 (HMT), 233 to 235 (SAS), 275 to 276 (YY), and Asn-319 contribute to the substrate site.

This sequence belongs to the class-II aminoacyl-tRNA synthetase family. O-phosphoseryl-tRNA(Cys) synthetase subfamily. In terms of assembly, homotetramer. Interacts with SepCysS.

The catalysed reaction is tRNA(Cys) + O-phospho-L-serine + ATP = O-phospho-L-seryl-tRNA(Cys) + AMP + diphosphate. In terms of biological role, catalyzes the attachment of O-phosphoserine (Sep) to tRNA(Cys). The sequence is that of O-phosphoserine--tRNA(Cys) ligase (sepS) from Methanocaldococcus jannaschii (strain ATCC 43067 / DSM 2661 / JAL-1 / JCM 10045 / NBRC 100440) (Methanococcus jannaschii).